The sequence spans 198 residues: 7-methyl-GTP pyrophosphatase (198 aa).

The Proton acceptor role is filled by Asp75.

This sequence belongs to the Maf family. YceF subfamily. Requires a divalent metal cation as cofactor.

It localises to the cytoplasm. The enzyme catalyses N(7)-methyl-GTP + H2O = N(7)-methyl-GMP + diphosphate + H(+). Functionally, nucleoside triphosphate pyrophosphatase that hydrolyzes 7-methyl-GTP (m(7)GTP). May have a dual role in cell division arrest and in preventing the incorporation of modified nucleotides into cellular nucleic acids. This Bartonella quintana (strain Toulouse) (Rochalimaea quintana) protein is 7-methyl-GTP pyrophosphatase.